The following is a 64-amino-acid chain: Translational regulator CsrA (64 aa).

Belongs to the CsrA/RsmA family. Homodimer; the beta-strands of each monomer intercalate to form a hydrophobic core, while the alpha-helices form wings that extend away from the core.

It localises to the cytoplasm. Functionally, a key translational regulator that binds mRNA to regulate translation initiation and/or mRNA stability. Mediates global changes in gene expression, shifting from rapid growth to stress survival by linking envelope stress, the stringent response and the catabolite repression systems. Usually binds in the 5'-UTR; binding at or near the Shine-Dalgarno sequence prevents ribosome-binding, repressing translation, binding elsewhere in the 5'-UTR can activate translation and/or stabilize the mRNA. Its function is antagonized by small RNA(s). The chain is Translational regulator CsrA from Dichelobacter nodosus (strain VCS1703A).